Here is a 145-residue protein sequence, read N- to C-terminus: Small ribosomal subunit protein uS12 (145 aa).

A Hydroxyproline modification is found at P64.

This sequence belongs to the universal ribosomal protein uS12 family.

This is Small ribosomal subunit protein uS12 (rps23) from Aspergillus fumigatus (strain ATCC MYA-4609 / CBS 101355 / FGSC A1100 / Af293) (Neosartorya fumigata).